Reading from the N-terminus, the 117-residue chain is Anti-adapter protein IraM (117 aa).

The protein belongs to the IraM/RssC family.

It is found in the cytoplasm. Involved in the stabilization of the sigma stress factor RpoS. In Klebsiella pneumoniae (strain 342), this protein is Anti-adapter protein IraM.